Consider the following 103-residue polypeptide: NADH-quinone oxidoreductase subunit K (103 aa).

Transmembrane regions (helical) follow at residues isoleucine 5–threonine 25, valine 30–phenylalanine 50, and leucine 66–leucine 86.

Belongs to the complex I subunit 4L family. In terms of assembly, NDH-1 is composed of 14 different subunits. Subunits NuoA, H, J, K, L, M, N constitute the membrane sector of the complex.

The protein resides in the cell membrane. The enzyme catalyses a quinone + NADH + 5 H(+)(in) = a quinol + NAD(+) + 4 H(+)(out). In terms of biological role, NDH-1 shuttles electrons from NADH, via FMN and iron-sulfur (Fe-S) centers, to quinones in the respiratory chain. The immediate electron acceptor for the enzyme in this species is believed to be a menaquinone. Couples the redox reaction to proton translocation (for every two electrons transferred, four hydrogen ions are translocated across the cytoplasmic membrane), and thus conserves the redox energy in a proton gradient. The polypeptide is NADH-quinone oxidoreductase subunit K (Brevibacillus brevis (strain 47 / JCM 6285 / NBRC 100599)).